We begin with the raw amino-acid sequence, 760 residues long: ATP-dependent zinc metalloprotease FtsH (760 aa).

Residues 1-5 are Cytoplasmic-facing; the sequence is MNRKN. A helical transmembrane segment spans residues 6–26; that stretch reads VTRTITAIAVVVLLGWSFFYF. At 27–110 the chain is on the extracellular side; sequence SDDTRGYKPV…KVSTVVNQGS (84 aa). Residues 111-131 traverse the membrane as a helical segment; sequence ILGELLVYVLPLLLLVGLFVM. At 132-760 the chain is on the cytoplasmic side; it reads FSRMQGGARM…EVSRTKPAHG (629 aa). 203–210 provides a ligand contact to ATP; sequence GPPGTGKT. A Zn(2+)-binding site is contributed by His425. Glu426 is an active-site residue. Residues His429 and Asp501 each contribute to the Zn(2+) site. A disordered region spans residues 616–760; it reads DFGGRIPSDK…EVSRTKPAHG (145 aa). Positions 650–669 are enriched in low complexity; the sequence is AFKAAIAQATQAAEAARSDA. Residues 740–750 show a composition bias toward acidic residues; it reads GSDESSAEQDD.

It in the central section; belongs to the AAA ATPase family. This sequence in the C-terminal section; belongs to the peptidase M41 family. Homohexamer. Requires Zn(2+) as cofactor.

The protein resides in the cell membrane. Its function is as follows. Acts as a processive, ATP-dependent zinc metallopeptidase for both cytoplasmic and membrane proteins. Plays a role in the quality control of integral membrane proteins. This Mycobacterium bovis (strain ATCC BAA-935 / AF2122/97) protein is ATP-dependent zinc metalloprotease FtsH.